The chain runs to 376 residues: DNA-directed RNA polymerase subunit alpha (376 aa).

Positions 1–259 (MSDNSQNLLY…KHFSIFEKMD (259 aa)) are alpha N-terminal domain (alpha-NTD). The interval 276 to 376 (KDDILHKLVL…EKIRSKNVKG (101 aa)) is alpha C-terminal domain (alpha-CTD).

This sequence belongs to the RNA polymerase alpha chain family. In terms of assembly, homodimer. The RNAP catalytic core consists of 2 alpha, 1 beta, 1 beta' and 1 omega subunit. When a sigma factor is associated with the core the holoenzyme is formed, which can initiate transcription.

The enzyme catalyses RNA(n) + a ribonucleoside 5'-triphosphate = RNA(n+1) + diphosphate. In terms of biological role, DNA-dependent RNA polymerase catalyzes the transcription of DNA into RNA using the four ribonucleoside triphosphates as substrates. The chain is DNA-directed RNA polymerase subunit alpha from Chlamydia felis (strain Fe/C-56) (Chlamydophila felis).